The sequence spans 889 residues: Coatomer subunit gamma-2 (889 aa).

HEAT repeat units follow at residues 67 to 102 (VEAT…SPSA), 103 to 140 (DEVI…STLL), 289 to 326 (RELT…THPL), 328 to 360 (VTNC…TGNE), and 361 to 398 (SSVD…KFPL). Positions 596 to 617 (PLAEKKTTGKKPTGPASALSGP) are disordered.

The protein belongs to the COPG family. Oligomeric complex that consists of at least the alpha, beta, beta', gamma, delta, epsilon and zeta subunits.

It localises to the cytoplasm. It is found in the golgi apparatus membrane. The protein resides in the cytoplasmic vesicle. Its subcellular location is the COPI-coated vesicle membrane. In terms of biological role, the coatomer is a cytosolic protein complex that binds to dilysine motifs and reversibly associates with Golgi non-clathrin-coated vesicles, which further mediate biosynthetic protein transport from the ER, via the Golgi up to the trans Golgi network. Coatomer complex is required for budding from Golgi membranes, and is essential for the retrograde Golgi-to-ER transport of dilysine-tagged proteins. The sequence is that of Coatomer subunit gamma-2 from Oryza sativa subsp. japonica (Rice).